We begin with the raw amino-acid sequence, 241 residues long: DNA repair protein RecO (241 aa).

The protein belongs to the RecO family.

Its function is as follows. Involved in DNA repair and RecF pathway recombination. This chain is DNA repair protein RecO, found in Orientia tsutsugamushi (strain Ikeda) (Rickettsia tsutsugamushi).